The sequence spans 102 residues: Small ribosomal subunit protein uS10 (102 aa).

Belongs to the universal ribosomal protein uS10 family. In terms of assembly, part of the 30S ribosomal subunit.

Involved in the binding of tRNA to the ribosomes. The chain is Small ribosomal subunit protein uS10 from Limosilactobacillus reuteri (strain DSM 20016) (Lactobacillus reuteri).